The primary structure comprises 210 residues: Large ribosomal subunit protein bL25 (210 aa).

A disordered region spans residues 179 to 210; that stretch reads LPPQQEEEIHSGEQQEPGHPDAEEGRETTPES. Basic and acidic residues predominate over residues 185 to 210; it reads EEIHSGEQQEPGHPDAEEGRETTPES.

The protein belongs to the bacterial ribosomal protein bL25 family. CTC subfamily. Part of the 50S ribosomal subunit; part of the 5S rRNA/L5/L18/L25 subcomplex. Contacts the 5S rRNA. Binds to the 5S rRNA independently of L5 and L18.

This is one of the proteins that binds to the 5S RNA in the ribosome where it forms part of the central protuberance. This Geobacillus sp. (strain WCH70) protein is Large ribosomal subunit protein bL25.